Here is a 451-residue protein sequence, read N- to C-terminus: Probable glycine dehydrogenase (decarboxylating) subunit 1 (451 aa).

The protein belongs to the GcvP family. N-terminal subunit subfamily. The glycine cleavage system is composed of four proteins: P, T, L and H. In this organism, the P 'protein' is a heterodimer of two subunits.

The catalysed reaction is N(6)-[(R)-lipoyl]-L-lysyl-[glycine-cleavage complex H protein] + glycine + H(+) = N(6)-[(R)-S(8)-aminomethyldihydrolipoyl]-L-lysyl-[glycine-cleavage complex H protein] + CO2. In terms of biological role, the glycine cleavage system catalyzes the degradation of glycine. The P protein binds the alpha-amino group of glycine through its pyridoxal phosphate cofactor; CO(2) is released and the remaining methylamine moiety is then transferred to the lipoamide cofactor of the H protein. The chain is Probable glycine dehydrogenase (decarboxylating) subunit 1 from Staphylococcus aureus (strain MSSA476).